Here is a 120-residue protein sequence, read N- to C-terminus: Protein VraC (120 aa).

The protein is Protein VraC of Staphylococcus epidermidis (strain ATCC 35984 / DSM 28319 / BCRC 17069 / CCUG 31568 / BM 3577 / RP62A).